Consider the following 390-residue polypeptide: Protein TAB2 homolog, chloroplastic (390 aa).

Residues 1–69 constitute a chloroplast transit peptide; sequence MTTATAIVAG…RSISSESSTE (69 aa). The segment at 16–85 is disordered; that stretch reads RRSLPLPNPP…IADEEVEAEN (70 aa). Residues 61–75 show a composition bias toward low complexity; the sequence is SISSESSTEASAAAD.

Its subcellular location is the plastid. It is found in the chloroplast. In terms of biological role, nuclear genome-encoded factor involved in the biogenesis of photosystem I (PSI). Required for the accumulation of PSI during plant development. Does not seem to be required for the translation of mRNAs of the PSI subunits. The chain is Protein TAB2 homolog, chloroplastic from Zea mays (Maize).